The following is a 285-amino-acid chain: Nudix hydrolase 15, mitochondrial (285 aa).

Residues Met1–Ser23 constitute a mitochondrion transit peptide. Residue Met24 is modified to N-acetylmethionine. 2 disordered regions span residues Arg51–Glu72 and Thr129–Ala152. Positions Pro99 to Thr255 constitute a Nudix hydrolase domain. The Nudix box motif lies at Lys140–Gly161. Mg(2+) is bound by residues Glu155 and Glu159.

This sequence belongs to the Nudix hydrolase family. The cofactor is Mg(2+). Mn(2+) serves as cofactor. As to expression, expressed in roots, leaves, stems and inflorescences.

The protein resides in the mitochondrion. Coenzyme A diphosphatase which mediates the cleavage of oxidized CoA. Can use malonyl-CoA, hexanoyl-CoA, lauroyl-CoA, myristoyl-CoA and palmitoyl-CoA as substrates, but not isobutyryl-CoA or propionyl-CoA. The sequence is that of Nudix hydrolase 15, mitochondrial (NUDT15) from Arabidopsis thaliana (Mouse-ear cress).